Here is a 2521-residue protein sequence, read N- to C-terminus: Piezo-type mechanosensitive ion channel component 1 (2521 aa).

The Cytoplasmic segment spans residues 1-12 (MEPHVLGAVLYW). A helical membrane pass occupies residues 13-25 (LLLPCALLAACLL). Residues 26–28 (RFS) lie on the Extracellular side of the membrane. Residues 29–44 (GLSLVYLLFLLLLPWF) form a helical membrane-spanning segment. Topologically, residues 45–58 (PGPTRCGLQGHTGR) are cytoplasmic. Residues 59 to 81 (LLRALLGLSLLFLVAHLALQICL) traverse the membrane as a helical segment. Over 82-121 (HIVPRLDQLLGPSCSRWETLSRHIGVTRLDLKDIPNAIRL) the chain is Extracellular. The chain crosses the membrane as a helical span at residues 122–138 (VAPDLGILVVSSVCLGI). Residues 139–194 (CGRLARNTRQSPHPRELDDDERDVDASPTAGLQEAATLAPTRRSRLAARFRVTAHW) lie on the Cytoplasmic side of the membrane. The helical transmembrane segment at 195–214 (LLVAAGRVLAVTLLALAGIA) threads the bilayer. The Extracellular segment spans residues 215–216 (HP). Residues 217–236 (SALSSVYLLLFLALCTWWAC) form a helical membrane-spanning segment. At 237–247 (HFPISTRGFSR) the chain is on the cytoplasmic side. Residues 248–268 (LCVAVGCFGAGHLICLYCYQM) traverse the membrane as a helical segment. The Extracellular segment spans residues 269 to 309 (PLAQALLPPAGIWARVLGLKDFVGPTNCSSPHALVLNTGLD). N295 carries N-linked (GlcNAc...) asparagine glycosylation. Residues 310–330 (WPVYASPGVLLLLCYATASLR) traverse the membrane as a helical segment. Over 331-417 (KLRAYRPSGQ…EASPLHSLGH (87 aa)) the chain is Cytoplasmic. Residues 418–438 (LIMDQSYVCALIAMMVWSITY) traverse the membrane as a helical segment. Topologically, residues 439-440 (HS) are extracellular. Residues 441-456 (WLTFVLLLWACLIWTV) traverse the membrane as a helical segment. At 457 to 461 (RSRHQ) the chain is on the cytoplasmic side. A helical transmembrane segment spans residues 462 to 484 (LAMLCSPCILLYGMTLCCLRYVW). At 485–512 (AMDLRPELPTTLGPVSLRQLGLEHTRYP) the chain is on the extracellular side. Residues 513–530 (CLDLGAMLLYTLTFWLLL) form a helical membrane-spanning segment. Topologically, residues 531-574 (RQFVKEKLLKWAESPAALTEVTVADTEPTRTQTLLQSLGELVKG) are cytoplasmic. Residues 575 to 595 (VYAKYWIYVCAGMFIVVSFAG) form a helical membrane-spanning segment. Position 596 (R596) is a topological domain, extracellular. Residues 597–617 (LVVYKIVYMFLFLLCLTLFQV) form a helical membrane-spanning segment. Topologically, residues 618–627 (YYSLWRKLLK) are cytoplasmic. Residues 628–649 (AFWWLVVAYTMLVLIAVYTFQF) traverse the membrane as a helical segment. At 650 to 679 (QDFPAYWRNLTGFTDEQLGDLGLEQFSVSE) the chain is on the extracellular side. Residues 680 to 696 (LFSSILVPGFFLLACIL) form a helical membrane-spanning segment. Topologically, residues 697–816 (QLHYFHRPFM…RRLLELHVFK (120 aa)) are cytoplasmic. Phosphothreonine is present on T734. Residues 738-769 (REEQQEHQQQQQEEEEEEEDSRDEGLGVATPH) are disordered. Positions 749 to 759 (QEEEEEEEDSR) are enriched in acidic residues. Residue S758 is modified to Phosphoserine. The helical transmembrane segment at 817-828 (LVALYTVWVALK) threads the bilayer. At 829-831 (EVS) the chain is on the extracellular side. A helical membrane pass occupies residues 832 to 845 (VMNLLLVVLWAFAL). Residues 846–859 (PYPRFRPMASCLST) lie on the Cytoplasmic side of the membrane. The chain crosses the membrane as a helical span at residues 860–874 (VWTCVIIVCKMLYQL). The Extracellular segment spans residues 875–926 (KVVNPQEYSSNCTEPFPNSTNLLPTEISQSLLYRGPVDPANWFGVRKGFPNL). The chain crosses the membrane as a helical span at residues 927-954 (GYIQNHLQVLLLLVFEAIVYRRQEHYRR). Residues 955-994 (QHQLAPLPAQAVFASGTRQQLDQDLLGCLKYFINFFFYKF) lie on the Cytoplasmic side of the membrane. The chain crosses the membrane as a helical span at residues 995–1010 (GLEICFLMAVNVIGQR). The Extracellular segment spans residues 1011–1012 (MN). A helical transmembrane segment spans residues 1013 to 1028 (FLVTLHGCWLVAILTR). Residues 1029 to 1041 (RHRQAIARLWPNY) lie on the Cytoplasmic side of the membrane. A helical membrane pass occupies residues 1042–1057 (CLFLALFLLYQYLLCL). Residues 1058 to 1096 (GMPPALCIDYPWRWSRAVPMNSALIKWLYLPDFFRAPNS) are Extracellular-facing. Residues 1097–1118 (TNLISDFLLLLCASQQWQVFSA) form a helical membrane-spanning segment. Residues 1119–1153 (ERTEEWQRMAGVNTDRLEPLRGEPNPVPNFIHCRS) lie on the Cytoplasmic side of the membrane. Residues 1154–1180 (YLDMLKVAVFRYLFWLVLVVVFVTGAT) traverse the membrane as a helical segment. Topologically, residues 1181–1185 (RISIF) are extracellular. A helical transmembrane segment spans residues 1186-1204 (GLGYLLACFYLLLFGTALL). The Cytoplasmic portion of the chain corresponds to 1205-1217 (QRDTRARLVLWDC). The helical transmembrane segment at 1218–1236 (LILYNVTVIISKNMLSLLA) threads the bilayer. Over 1237–1285 (CVFVEQMQTGFCWVIQLFSLVCTVKGYYDPKEMMDRDQDCLLPVEEAGI) the chain is Extracellular. Residues 1286 to 1302 (IWDSVCFFFLLLQRRVF) traverse the membrane as a helical segment. Residues 1303–1656 (LSHYYLHVRA…ELLLDRRLRI (354 aa)) lie on the Cytoplasmic side of the membrane. Positions 1339 to 1368 (HRRIEEKSLAQLKRQMERIRAKQEKHRQGR) form a coiled coil. 3 disordered regions span residues 1356–1402 (RIRA…RRQW), 1462–1498 (RQQE…EAAA), and 1576–1630 (TLPG…DPGE). The span at 1385–1398 (LEPGPDSPGGSSPP) shows a compositional bias: low complexity. Residues S1391 and S1396 each carry the phosphoserine modification. Phosphoserine is present on residues S1636 and S1646. A helical transmembrane segment spans residues 1657–1700 (PELEEAELFAEGQGRALRLLRAVYQCVAAHSELLCYFIIILNHM). At 1701-1704 (VTAS) the chain is on the extracellular side. The chain crosses the membrane as a helical span at residues 1705 to 1720 (AGSLVLPVLVFLWAML). The Cytoplasmic segment spans residues 1721–1728 (SIPRPSKR). Residues 1729–1747 (FWMTAIVFTEIAVVVKYLF) traverse the membrane as a helical segment. Residues 1748–1779 (QFGFFPWNSHVVLRRYENKPYFPPRILGLEKT) lie on the Extracellular side of the membrane. A helical transmembrane segment spans residues 1780–1801 (DGYIKYDLVQLMALFFHRSQLL). Residues 1802–1960 (CYGLWDHEED…HTKYRAATDV (159 aa)) lie on the Cytoplasmic side of the membrane. Over residues 1811-1822 (DSPSKEHDKSGE) the composition is skewed to basic and acidic residues. A disordered region spans residues 1811–1921 (DSPSKEHDKS…RPSRSGGRVR (111 aa)). T1854 is modified (phosphothreonine). Residues 1859 to 1868 (VELRPRDTRR) show a composition bias toward basic and acidic residues. Residues 1869–1878 (ISLRFRRRKK) are compositionally biased toward basic residues. Acidic residues predominate over residues 1890-1903 (EAEDREEEEGEEEK). Residues 1904 to 1913 (EAPTGREKRP) show a composition bias toward basic and acidic residues. Residues 1961–1980 (YALMFLADVVDFIIIIFGFW) traverse the membrane as a helical segment. The Extracellular portion of the chain corresponds to 1981-2000 (AFGKHSAATDITSSLSDDQV). The chain crosses the membrane as a helical span at residues 2001–2017 (PEAFLVMLLIQFSTMVV). The Cytoplasmic portion of the chain corresponds to 2018–2031 (DRALYLRKTVLGKL). Residues 2032–2052 (AFQVALVLAIHLWMFFILPAV) traverse the membrane as a helical segment. The Extracellular segment spans residues 2053–2060 (TERMFNQN). Residues 2061 to 2076 (VVAQLWYFVKCIYFAL) form a helical membrane-spanning segment. Residues 2077–2176 (SAYQIRCGYP…KKKIVKYGMG (100 aa)) are Cytoplasmic-facing. A helical transmembrane segment spans residues 2177-2197 (GLIILFLIAIIWFPLLFMSLV). Residues 2198–2431 (RSVVGVVNQP…IFSDKVSPPS (234 aa)) lie on the Extracellular side of the membrane. N-linked (GlcNAc...) asparagine glycosylation occurs at N2294. Cysteines 2411 and 2415 form a disulfide. A helical transmembrane segment spans residues 2432-2452 (LGFLAGYGIMGLYVSIVLVIG). The Cytoplasmic portion of the chain corresponds to 2453–2521 (KFVRGFFSEI…TMIKWTREKE (69 aa)).

It belongs to the PIEZO (TC 1.A.75) family. Homotrimer; the homotrimer forms a propeller-shaped Piezo channel with a cation-ion conducting pore. Heterotrimeric interaction may occur between PIEZO1 and PIEZO2. Interacts with PKD2. Interacts with STOML3. Interacts with TMC1, TMC2, PCDH15 and CIB2; the interaction may be part of the MET complex. Interacts with MDFIC (via C-terminus); the interaction prolongs Piezo channel inactivation. Interacts with MDFI (via C-terminus); the interaction prolongs Piezo channel inactivation. Expressed in numerous tissues. In normal brain, expressed exclusively in neurons, not in astrocytes. In Alzheimer disease brains, expressed in about half of the activated astrocytes located around classical senile plaques. In Parkinson disease substantia nigra, not detected in melanin-containing neurons nor in activated astrocytes. Expressed in erythrocytes (at protein level). Expressed in myoblasts (at protein level).

The protein localises to the endoplasmic reticulum membrane. It is found in the endoplasmic reticulum-Golgi intermediate compartment membrane. It localises to the cell membrane. Its subcellular location is the cell projection. The protein resides in the lamellipodium membrane. It carries out the reaction K(+)(in) = K(+)(out). The enzyme catalyses Na(+)(in) = Na(+)(out). It catalyses the reaction Ca(2+)(in) = Ca(2+)(out). The catalysed reaction is Mg(2+)(in) = Mg(2+)(out). Regulated by auxillary subunits MDFIC and MDFI. Down-regulated by phosphatidylserines exposed on the cell surface. Divalent ions decrease the single-channel permeability of K(+). In terms of biological role, pore-forming subunit of the mechanosensitive non-specific cation Piezo channel required for rapidly adapting mechanically activated (MA) currents and has a key role in sensing touch and tactile pain. Piezo channels are homotrimeric three-blade propeller-shaped structures that utilize a cap-motion and plug-and-latch mechanism to gate their ion-conducting pathways. Generates currents characterized by a linear current-voltage relationship that are sensitive to ruthenium red and gadolinium. Conductance to monovalent alkali ions is highest for K(+), intermediate for Na(+) and lowest for Li(+). Divalent ions except for Mn(2+) permeate the channel but more slowly than the monovalent ions and they also reduce K(+) currents. Plays a key role in epithelial cell adhesion by maintaining integrin activation through R-Ras recruitment to the ER, most probably in its activated state, and subsequent stimulation of calpain signaling. In inner ear hair cells, PIEZO1/2 subunits may constitute part of the mechanotransducer (MET) non-selective cation channel complex where they may act as pore-forming ion-conducting component in the complex. In the kidney, may contribute to the detection of intraluminal pressure changes and to urine flow sensing. Acts as a shear-stress sensor that promotes endothelial cell organization and alignment in the direction of blood flow through calpain activation. Plays a key role in blood vessel formation and vascular structure in both development and adult physiology. Acts as a sensor of phosphatidylserine (PS) flipping at the plasma membrane and governs morphogenesis of muscle cells. In myoblasts, flippase-mediated PS enrichment at the inner leaflet of plasma membrane triggers channel activation and Ca2+ influx followed by Rho GTPases signal transduction, leading to assembly of cortical actomyosin fibers and myotube formation. This chain is Piezo-type mechanosensitive ion channel component 1, found in Homo sapiens (Human).